A 688-amino-acid polypeptide reads, in one-letter code: Collagen alpha-2(IX) chain (688 aa).

Positions 1–22 (MTAVPAPRSLFVLLQVLWLALA) are cleaved as a signal peptide. The segment at 26-162 (GPPGEPGPPG…PGKPGRPGTI (137 aa)) is triple-helical region 4 (COL4). Residues 26–171 (GPPGEPGPPG…IQGLEGSADF (146 aa)) are disordered. Composition is skewed to pro residues over residues 28–42 (PGEPGPPGPPGPPGV) and 105–126 (LPGPPGLPGPGFAGPPGPPGPV). Residues 128–137 (LPGEIGTPGP) are compositionally biased toward low complexity. Positions 138–156 (KGDPGPEGPSGPPGPPGKP) are enriched in pro residues. P159 is subject to 4-hydroxyproline. A nonhelical region 4 (NC4) region spans residues 163 to 179 (QGLEGSADFLCPTNCPA). S168 carries an O-linked (Xyl...) (glycosaminoglycan) serine glycan. The interval 180–518 (GVKGPQGLQG…PGRQGVVGRA (339 aa)) is triple-helical region 3 (COL3). A 5-hydroxylysine modification is found at K182. A glycan (O-linked (Gal...) hydroxylysine) is linked at K182. The segment at 183–517 (GPQGLQGVKG…QPGRQGVVGR (335 aa)) is disordered. Low complexity-rich tracts occupy residues 289 to 314 (PQGITGPKGITGPPGIDGKDGTPGIP) and 392 to 412 (RGPVGQPGPQGRQGPKGEQGP). Over residues 435-444 (GPRGGVGDPG) the composition is skewed to gly residues. Low complexity predominate over residues 502–517 (DRGVPGQPGRQGVVGR). Positions 519–548 (ASDQHIVDVVLKMIQEQLAEVAVSAKREAL) are nonhelical region 3 (NC3). The tract at residues 549–631 (GAAGMVGLPG…PGLPGRPGQA (83 aa)) is triple-helical region 2 (COL2). The segment at 553 to 664 (MVGLPGPPGP…GPVGLPGFCE (112 aa)) is disordered. Over residues 598-610 (KRGEKGDRGEMGH) the composition is skewed to basic and acidic residues. Residues 632-633 (IN) form a nonhelical region 2 (NC2) region. The segment at 634–663 (GKDGDRGSPGAPGEAGRPGRPGPVGLPGFC) is triple-helical region 1 (COL1). The interval 664–688 (EPAACLGASAYTSARLTEPGSIKGP) is nonhelical region 1 (NC1).

It belongs to the fibril-associated collagens with interrupted helices (FACIT) family. In terms of assembly, heterotrimer of an alpha 1(IX), an alpha 2(IX) and an alpha 3(IX) chain. The chains are linked to each other by interchain disulfide bonds. Trimers are also cross-linked via hydroxylysines. Covalently linked to the telopeptides of type II collagen by lysine-derived cross-links. In terms of processing, prolines at the third position of the tripeptide repeating unit (G-X-Y) are hydroxylated in some or all of the chains.

It localises to the secreted. It is found in the extracellular space. The protein resides in the extracellular matrix. Functionally, structural component of hyaline cartilage and vitreous of the eye. This is Collagen alpha-2(IX) chain (Col9a2) from Mus musculus (Mouse).